The following is a 366-amino-acid chain: Histidinol-phosphate aminotransferase (366 aa).

Residue K227 is modified to N6-(pyridoxal phosphate)lysine.

Belongs to the class-II pyridoxal-phosphate-dependent aminotransferase family. Histidinol-phosphate aminotransferase subfamily. Homodimer. Pyridoxal 5'-phosphate is required as a cofactor.

The enzyme catalyses L-histidinol phosphate + 2-oxoglutarate = 3-(imidazol-4-yl)-2-oxopropyl phosphate + L-glutamate. The protein operates within amino-acid biosynthesis; L-histidine biosynthesis; L-histidine from 5-phospho-alpha-D-ribose 1-diphosphate: step 7/9. The sequence is that of Histidinol-phosphate aminotransferase from Campylobacter hominis (strain ATCC BAA-381 / DSM 21671 / CCUG 45161 / LMG 19568 / NCTC 13146 / CH001A).